The primary structure comprises 573 residues: Thiol:disulfide interchange protein DsbD (573 aa).

The first 20 residues, 1-20, serve as a signal peptide directing secretion; the sequence is MLKRFFLLLSSLLLVCNVQA. At 21–175 the chain is on the periplasmic side; the sequence is GLFNNKPQYL…AENLSNNYLS (155 aa). Disulfide bonds link Cys-121/Cys-126 and Cys-191/Cys-313. The helical transmembrane segment at 176–196 threads the bilayer; that stretch reads IFGFLLLGIGLAFTPCVLPML. Residues 197-227 lie on the Cytoplasmic side of the membrane; it reads PLLSAIVIGHKNRPNTSRALLLSFTYVQGMA. Residues 228 to 248 traverse the membrane as a helical segment; sequence LTYTLLGLTVAAIGLPFQVAL. The Periplasmic portion of the chain corresponds to 249-251; it reads QSP. The chain crosses the membrane as a helical span at residues 252–272; sequence AVLISLAVLFTLLAASMFGLF. Residues 273–292 lie on the Cytoplasmic side of the membrane; that stretch reads EIRLPNTWQQKLNALSQQQQ. The helical transmembrane segment at 293-313 threads the bilayer; the sequence is GGAVGNVFIMGIIAGLVASPC. The Periplasmic portion of the chain corresponds to 314-331; sequence TSAPLSGALLYVAQSGNL. A helical transmembrane segment spans residues 332 to 352; the sequence is LIGGLALYLLALGMGLPLILI. Residues 353–365 are Cytoplasmic-facing; the sequence is TVFGNQILPKSGE. A helical membrane pass occupies residues 366–386; that stretch reads WLFKVKTAFGFVMLALPIFLI. Topologically, residues 387 to 393 are periplasmic; the sequence is SRILPSH. The chain crosses the membrane as a helical span at residues 394–414; it reads YEPFLWSTLALAFLGWLISSL. Over 415-425 the chain is Cytoplasmic; sequence NYSTMLKQAVR. A helical membrane pass occupies residues 426–446; sequence ILLFIAFGLTAYPWANLVWQT. The Thioredoxin domain occupies 440-573; the sequence is ANLVWQTTSN…NQFLAWLNRL (134 aa). At 447 to 573 the chain is on the periplasmic side; it reads TSNTAQPTTP…NQFLAWLNRL (127 aa). A disulfide bond links Cys-490 and Cys-493.

It belongs to the thioredoxin family. DsbD subfamily.

It is found in the cell inner membrane. The enzyme catalyses [protein]-dithiol + NAD(+) = [protein]-disulfide + NADH + H(+). The catalysed reaction is [protein]-dithiol + NADP(+) = [protein]-disulfide + NADPH + H(+). In terms of biological role, required to facilitate the formation of correct disulfide bonds in some periplasmic proteins and for the assembly of the periplasmic c-type cytochromes. Acts by transferring electrons from cytoplasmic thioredoxin to the periplasm. This transfer involves a cascade of disulfide bond formation and reduction steps. The polypeptide is Thiol:disulfide interchange protein DsbD (Haemophilus ducreyi (strain 35000HP / ATCC 700724)).